A 255-amino-acid polypeptide reads, in one-letter code: Cullin-like protein 3 (255 aa).

It belongs to the cullin family.

In Arabidopsis thaliana (Mouse-ear cress), this protein is Cullin-like protein 3.